Reading from the N-terminus, the 195-residue chain is UPF0314 protein RL4541 (195 aa).

4 helical membrane passes run 15–35 (FWFVACFAVLVIQIAVEYMMG), 64–84 (WYTPSHIIHGFLFYGLAHLIL), 127–147 (GDSILNSAMDTVFMCVGFFFA), and 150–170 (APVALTVAIATFFEIFTGYII).

It belongs to the UPF0314 family.

The protein localises to the cell membrane. This is UPF0314 protein RL4541 from Rhizobium johnstonii (strain DSM 114642 / LMG 32736 / 3841) (Rhizobium leguminosarum bv. viciae).